A 544-amino-acid chain; its full sequence is ATP synthase subunit alpha (544 aa).

Residue G173–T180 coordinates ATP. Residues G513–G544 are disordered. Acidic residues predominate over residues P524–Q535.

The protein belongs to the ATPase alpha/beta chains family. In terms of assembly, F-type ATPases have 2 components, CF(1) - the catalytic core - and CF(0) - the membrane proton channel. CF(1) has five subunits: alpha(3), beta(3), gamma(1), delta(1), epsilon(1). CF(0) has three main subunits: a(1), b(2) and c(9-12). The alpha and beta chains form an alternating ring which encloses part of the gamma chain. CF(1) is attached to CF(0) by a central stalk formed by the gamma and epsilon chains, while a peripheral stalk is formed by the delta and b chains.

It localises to the cell membrane. The catalysed reaction is ATP + H2O + 4 H(+)(in) = ADP + phosphate + 5 H(+)(out). In terms of biological role, produces ATP from ADP in the presence of a proton gradient across the membrane. The alpha chain is a regulatory subunit. This Beutenbergia cavernae (strain ATCC BAA-8 / DSM 12333 / CCUG 43141 / JCM 11478 / NBRC 16432 / NCIMB 13614 / HKI 0122) protein is ATP synthase subunit alpha.